Here is a 457-residue protein sequence, read N- to C-terminus: Multidrug resistance protein MdtK (457 aa).

The Cytoplasmic portion of the chain corresponds to 1 to 10; it reads MQKYISEARL. Residues 11 to 31 form a helical membrane-spanning segment; it reads LLALAIPVILAQIAQTAMGFV. Residues 32 to 52 lie on the Periplasmic side of the membrane; sequence DTVMAGGYSATDMAAVAIGTS. A helical transmembrane segment spans residues 53 to 73; sequence IWLPAILFGHGLLLALTPVIA. Over 74–92 the chain is Cytoplasmic; that stretch reads QLNGSGRRERIAHQVRQGF. Residues 93-113 traverse the membrane as a helical segment; that stretch reads WLAGFVSVLIMLVLWNAGYII. Topologically, residues 114-126 are periplasmic; sequence RYMENIDPALADK. The helical transmembrane segment at 127–147 threads the bilayer; sequence AVGYLRALLWGAPGYLFFQVA. Over 148–159 the chain is Cytoplasmic; it reads RNQCEGLAKAKP. The chain crosses the membrane as a helical span at residues 160-180; it reads GMVMGFIGLLVNIPVNYIFIY. Topologically, residues 181 to 188 are periplasmic; that stretch reads GHFGMPEL. Residues 189–209 form a helical membrane-spanning segment; the sequence is GGVGCGVATAAVYWVMFLAMV. Residues 210–242 lie on the Cytoplasmic side of the membrane; it reads SYIKRARSMRDIRNEKGTAKPEPAVMKRLIQLG. A helical transmembrane segment spans residues 243–263; it reads LPIALALFLEVTLFAVVALLV. The Periplasmic portion of the chain corresponds to 264–275; the sequence is SPLGIVDVAGHQ. Residues 276-296 form a helical membrane-spanning segment; sequence IALNFSSLMFVLPMSLAAAVT. The Cytoplasmic portion of the chain corresponds to 297–313; sequence IRVGYRLGQGSTLDAQT. A helical transmembrane segment spans residues 314–334; the sequence is AARTGLMVGVCMATLTAIFTV. At 335 to 349 the chain is on the periplasmic side; sequence SLREQIALLYNDNPE. A helical transmembrane segment spans residues 350-370; sequence VVTLAAHLMLLAAVYQISDSI. At 371-386 the chain is on the cytoplasmic side; it reads QVIGSGILRGYKDTRS. Residues 387–407 traverse the membrane as a helical segment; the sequence is IFYITFTAYWVLGLPSGYILA. Topologically, residues 408 to 417 are periplasmic; the sequence is LTDLVVEPMG. The helical transmembrane segment at 418–438 threads the bilayer; that stretch reads PAGFWIGFIIGLTSAAIMMML. Topologically, residues 439-457 are cytoplasmic; it reads RMRFLQRMPSAIILQRASR.

Belongs to the multi antimicrobial extrusion (MATE) (TC 2.A.66.1) family. MdtK subfamily.

Its subcellular location is the cell inner membrane. Functionally, multidrug efflux pump that functions probably as a Na(+)/drug antiporter. The chain is Multidrug resistance protein MdtK from Shigella flexneri serotype 5b (strain 8401).